The primary structure comprises 879 residues: Alanine--tRNA ligase (879 aa).

Residues H566, H570, C668, and H672 each coordinate Zn(2+).

This sequence belongs to the class-II aminoacyl-tRNA synthetase family. Requires Zn(2+) as cofactor.

The protein localises to the cytoplasm. It catalyses the reaction tRNA(Ala) + L-alanine + ATP = L-alanyl-tRNA(Ala) + AMP + diphosphate. Functionally, catalyzes the attachment of alanine to tRNA(Ala) in a two-step reaction: alanine is first activated by ATP to form Ala-AMP and then transferred to the acceptor end of tRNA(Ala). Also edits incorrectly charged Ser-tRNA(Ala) and Gly-tRNA(Ala) via its editing domain. The protein is Alanine--tRNA ligase of Oceanobacillus iheyensis (strain DSM 14371 / CIP 107618 / JCM 11309 / KCTC 3954 / HTE831).